Here is a 160-residue protein sequence, read N- to C-terminus: Transcription elongation factor GreA (160 aa).

Residues 1–71 (MAEKTYPMTK…GQISTLETQI (71 aa)) adopt a coiled-coil conformation.

Belongs to the GreA/GreB family.

Its function is as follows. Necessary for efficient RNA polymerase transcription elongation past template-encoded arresting sites. The arresting sites in DNA have the property of trapping a certain fraction of elongating RNA polymerases that pass through, resulting in locked ternary complexes. Cleavage of the nascent transcript by cleavage factors such as GreA or GreB allows the resumption of elongation from the new 3'terminus. GreA releases sequences of 2 to 3 nucleotides. The sequence is that of Transcription elongation factor GreA from Streptococcus uberis (strain ATCC BAA-854 / 0140J).